Here is a 409-residue protein sequence, read N- to C-terminus: Arginine deiminase (409 aa).

The active-site Amidino-cysteine intermediate is C399.

This sequence belongs to the arginine deiminase family.

It localises to the cytoplasm. The catalysed reaction is L-arginine + H2O = L-citrulline + NH4(+). The protein operates within amino-acid degradation; L-arginine degradation via ADI pathway; carbamoyl phosphate from L-arginine: step 1/2. This chain is Arginine deiminase, found in Borrelia duttonii (strain Ly).